The sequence spans 591 residues: NADH-quinone oxidoreductase subunit C/D (591 aa).

Positions 1–182 (MVTVVENIDP…TPYFLNTAKQ (182 aa)) are NADH dehydrogenase I subunit C. Residues 206-591 (DFMFLNIGPN…IDVVMADCDR (386 aa)) form an NADH dehydrogenase I subunit D region.

It in the N-terminal section; belongs to the complex I 30 kDa subunit family. The protein in the C-terminal section; belongs to the complex I 49 kDa subunit family. NDH-1 is composed of 13 different subunits. Subunits NuoB, CD, E, F, and G constitute the peripheral sector of the complex.

It is found in the cell inner membrane. The enzyme catalyses a quinone + NADH + 5 H(+)(in) = a quinol + NAD(+) + 4 H(+)(out). Functionally, NDH-1 shuttles electrons from NADH, via FMN and iron-sulfur (Fe-S) centers, to quinones in the respiratory chain. The immediate electron acceptor for the enzyme in this species is believed to be ubiquinone. Couples the redox reaction to proton translocation (for every two electrons transferred, four hydrogen ions are translocated across the cytoplasmic membrane), and thus conserves the redox energy in a proton gradient. In Psychrobacter arcticus (strain DSM 17307 / VKM B-2377 / 273-4), this protein is NADH-quinone oxidoreductase subunit C/D.